The following is an 807-amino-acid chain: Glycerol-3-phosphate acyltransferase (807 aa).

The HXXXXD motif motif lies at 305–310 (CHRSHM).

Belongs to the GPAT/DAPAT family.

It localises to the cell inner membrane. It carries out the reaction sn-glycerol 3-phosphate + an acyl-CoA = a 1-acyl-sn-glycero-3-phosphate + CoA. The protein operates within phospholipid metabolism; CDP-diacylglycerol biosynthesis; CDP-diacylglycerol from sn-glycerol 3-phosphate: step 1/3. The polypeptide is Glycerol-3-phosphate acyltransferase (Escherichia coli O139:H28 (strain E24377A / ETEC)).